A 204-amino-acid chain; its full sequence is Methylthioribulose-1-phosphate dehydratase (204 aa).

Zn(2+) is bound by residues His-94 and His-96.

Belongs to the aldolase class II family. MtnB subfamily. Zn(2+) is required as a cofactor.

It catalyses the reaction 5-(methylsulfanyl)-D-ribulose 1-phosphate = 5-methylsulfanyl-2,3-dioxopentyl phosphate + H2O. The protein operates within amino-acid biosynthesis; L-methionine biosynthesis via salvage pathway; L-methionine from S-methyl-5-thio-alpha-D-ribose 1-phosphate: step 2/6. Functionally, catalyzes the dehydration of methylthioribulose-1-phosphate (MTRu-1-P) into 2,3-diketo-5-methylthiopentyl-1-phosphate (DK-MTP-1-P). This is Methylthioribulose-1-phosphate dehydratase from Serratia proteamaculans (strain 568).